Reading from the N-terminus, the 206-residue chain is Ribosomal RNA large subunit methyltransferase E (206 aa).

S-adenosyl-L-methionine contacts are provided by glycine 60, tryptophan 62, aspartate 80, aspartate 96, and aspartate 121. The active-site Proton acceptor is the lysine 161.

It belongs to the class I-like SAM-binding methyltransferase superfamily. RNA methyltransferase RlmE family.

The protein localises to the cytoplasm. The catalysed reaction is uridine(2552) in 23S rRNA + S-adenosyl-L-methionine = 2'-O-methyluridine(2552) in 23S rRNA + S-adenosyl-L-homocysteine + H(+). In terms of biological role, specifically methylates the uridine in position 2552 of 23S rRNA at the 2'-O position of the ribose in the fully assembled 50S ribosomal subunit. The polypeptide is Ribosomal RNA large subunit methyltransferase E (Francisella tularensis subsp. holarctica (strain FTNF002-00 / FTA)).